The chain runs to 436 residues: UPF0597 protein YhaM (436 aa).

This sequence belongs to the UPF0597 family.

This is UPF0597 protein YhaM from Salmonella typhi.